Consider the following 258-residue polypeptide: Pyridoxine 5'-phosphate synthase (258 aa).

Asparagine 16 is a binding site for 3-amino-2-oxopropyl phosphate. A 1-deoxy-D-xylulose 5-phosphate-binding site is contributed by 18-19 (DH). Arginine 27 contributes to the 3-amino-2-oxopropyl phosphate binding site. Residue histidine 52 is the Proton acceptor of the active site. Arginine 54 and histidine 59 together coordinate 1-deoxy-D-xylulose 5-phosphate. The active-site Proton acceptor is the glutamate 79. Threonine 109 is a binding site for 1-deoxy-D-xylulose 5-phosphate. Residue histidine 200 is the Proton donor of the active site. Residues glycine 201 and 222–223 (GH) each bind 3-amino-2-oxopropyl phosphate.

It belongs to the PNP synthase family. Homooctamer; tetramer of dimers.

It localises to the cytoplasm. It catalyses the reaction 3-amino-2-oxopropyl phosphate + 1-deoxy-D-xylulose 5-phosphate = pyridoxine 5'-phosphate + phosphate + 2 H2O + H(+). The protein operates within cofactor biosynthesis; pyridoxine 5'-phosphate biosynthesis; pyridoxine 5'-phosphate from D-erythrose 4-phosphate: step 5/5. Catalyzes the complicated ring closure reaction between the two acyclic compounds 1-deoxy-D-xylulose-5-phosphate (DXP) and 3-amino-2-oxopropyl phosphate (1-amino-acetone-3-phosphate or AAP) to form pyridoxine 5'-phosphate (PNP) and inorganic phosphate. This is Pyridoxine 5'-phosphate synthase from Burkholderia lata (strain ATCC 17760 / DSM 23089 / LMG 22485 / NCIMB 9086 / R18194 / 383).